A 427-amino-acid chain; its full sequence is Peptidase B (427 aa).

Residues Lys195 and Asp200 each contribute to the Mn(2+) site. The active site involves Lys207. Mn(2+) is bound by residues Asp218, Asp277, and Glu279. Residue Arg281 is part of the active site.

The protein belongs to the peptidase M17 family. Homohexamer. Requires Mn(2+) as cofactor.

The protein resides in the cytoplasm. It carries out the reaction Release of an N-terminal amino acid, Xaa, from a peptide or arylamide. Xaa is preferably Glu or Asp but may be other amino acids, including Leu, Met, His, Cys and Gln.. Functionally, probably plays an important role in intracellular peptide degradation. The sequence is that of Peptidase B from Escherichia fergusonii (strain ATCC 35469 / DSM 13698 / CCUG 18766 / IAM 14443 / JCM 21226 / LMG 7866 / NBRC 102419 / NCTC 12128 / CDC 0568-73).